Consider the following 1229-residue polypeptide: DNA-directed RNA polymerase subunit beta (1229 aa).

Residues 1175–1229 form a disordered region; the sequence is ESIDEDEQPQGLGAFERGLEEVENGEEDDDKEKFYEDLMDASQEQDESADDDIDE. 2 stretches are compositionally biased toward acidic residues: residues 1195–1204 and 1211–1229; these read EVENGEEDDD and DLMD…DIDE.

The protein belongs to the RNA polymerase beta chain family. In terms of assembly, the RNAP catalytic core consists of 2 alpha, 1 beta, 1 beta' and 1 omega subunit. When a sigma factor is associated with the core the holoenzyme is formed, which can initiate transcription.

It catalyses the reaction RNA(n) + a ribonucleoside 5'-triphosphate = RNA(n+1) + diphosphate. In terms of biological role, DNA-dependent RNA polymerase catalyzes the transcription of DNA into RNA using the four ribonucleoside triphosphates as substrates. The protein is DNA-directed RNA polymerase subunit beta of Caldicellulosiruptor saccharolyticus (strain ATCC 43494 / DSM 8903 / Tp8T 6331).